Consider the following 179-residue polypeptide: Large ribosomal subunit protein uL6 (179 aa).

This sequence belongs to the universal ribosomal protein uL6 family. Part of the 50S ribosomal subunit.

This protein binds to the 23S rRNA, and is important in its secondary structure. It is located near the subunit interface in the base of the L7/L12 stalk, and near the tRNA binding site of the peptidyltransferase center. In Kineococcus radiotolerans (strain ATCC BAA-149 / DSM 14245 / SRS30216), this protein is Large ribosomal subunit protein uL6.